A 464-amino-acid polypeptide reads, in one-letter code: 3-isopropylmalate dehydratase large subunit (464 aa).

Cysteine 337, cysteine 397, and cysteine 400 together coordinate [4Fe-4S] cluster.

This sequence belongs to the aconitase/IPM isomerase family. LeuC type 1 subfamily. As to quaternary structure, heterodimer of LeuC and LeuD. [4Fe-4S] cluster is required as a cofactor.

The enzyme catalyses (2R,3S)-3-isopropylmalate = (2S)-2-isopropylmalate. It functions in the pathway amino-acid biosynthesis; L-leucine biosynthesis; L-leucine from 3-methyl-2-oxobutanoate: step 2/4. Its function is as follows. Catalyzes the isomerization between 2-isopropylmalate and 3-isopropylmalate, via the formation of 2-isopropylmaleate. This Bacillus cereus (strain ATCC 10987 / NRS 248) protein is 3-isopropylmalate dehydratase large subunit.